We begin with the raw amino-acid sequence, 362 residues long: 11-beta-hydroxysteroid dehydrogenase B (362 aa).

A helical; Signal-anchor for type II membrane protein transmembrane segment spans residues 10–30 (FVVPPASLLMLAFTWPTLFFI). The short motif at 13–26 (PPASLLMLAFTWPT) is the Proline-knob element. 55–81 (GASSGIGEQIAYQYAKRGANLVLVARR) contributes to the NADP(+) binding site. Ser-185 is a binding site for substrate. Tyr-198 serves as the catalytic Proton acceptor. NADP(+) is bound by residues 198–202 (YSAAK) and Lys-202. The tract at residues 321–362 (TGRPLLETSSPRRSAVMEGSSPRRLPPGPLTFSPAFQQQKSE) is disordered.

Belongs to the short-chain dehydrogenases/reductases (SDR) family. Expressed in seeds (at protein level). Not expressed in stem, leaf or root (at protein level).

The protein localises to the lipid droplet. It localises to the membrane. It catalyses the reaction an 11beta-hydroxysteroid + NADP(+) = an 11-oxosteroid + NADPH + H(+). The catalysed reaction is corticosterone + NADP(+) = 11-dehydrocorticosterone + NADPH + H(+). It carries out the reaction 17beta-estradiol + NADP(+) = estrone + NADPH + H(+). Its function is as follows. Has dehydrogenase activity against corticosterone (11 beta-hydroxysteroid) and estradiol (17 beta-hydroxysteroid), with similar activities to both sterols in the presence of NADP(+), but negligible activity to either sterol in the presence of NAD(+). May be involved in signal transduction regulated by various sterols. This chain is 11-beta-hydroxysteroid dehydrogenase B, found in Sesamum indicum (Oriental sesame).